We begin with the raw amino-acid sequence, 221 residues long: Protein myomaker (221 aa).

Residues 1–3 (MGT) lie on the Extracellular side of the membrane. The chain crosses the membrane as a helical span at residues 4–24 (LVAKLLLPTLSSLAFLPTVSI). The Cytoplasmic segment spans residues 25 to 34 (AAKRRFHMEA). Residues 35–55 (MVYLFTLFFVALHHACNGPGL) form a helical membrane-spanning segment. Residues 56-64 (SVLCFMRHD) lie on the Extracellular side of the membrane. A helical transmembrane segment spans residues 65–85 (ILEYFSVYGTALSMWVSLMAL). The Cytoplasmic portion of the chain corresponds to 86–92 (ADFDEPK). Residues 93–110 (RSTFVMFGVLTIAVRIYH) form a helical membrane-spanning segment. Residues 111–113 (DRW) lie on the Extracellular side of the membrane. The helical transmembrane segment at 114–134 (GYGVYSGPIGTAILIIAAKWL) threads the bilayer. The Cytoplasmic segment spans residues 135–153 (QKMKEKKGLYPDKSVYTQQ). Residues 154–174 (IGPGLCFGALALMLRFFFEDW) traverse the membrane as a helical segment. Position 175 (D175) is a topological domain, extracellular. Residues 176–196 (YTYVHSFYHCALAMSFVLLLP) traverse the membrane as a helical segment. Over 197 to 221 (KVNKKAGSPGTPAKLDCSTLCCACV) the chain is Cytoplasmic. 2 S-palmitoyl cysteine lipidation sites follow: C217 and C218.

It belongs to the TMEM8 family. As to quaternary structure, interacts with MYMX. In terms of processing, palmitoylated at the C-terminus; palmitoylation promotes localization to the Golgi apparatus.

It is found in the cell membrane. Its subcellular location is the golgi apparatus membrane. In terms of biological role, myoblast-specific protein that mediates myoblast fusion, an essential step for the formation of multi-nucleated muscle fibers. Actively participates in the membrane fusion reaction by mediating the mixing of cell membrane lipids (hemifusion) upstream of MYMX. Acts independently of MYMX. Involved in skeletal muscle regeneration in response to injury by mediating the fusion of satellite cells, a population of muscle stem cells, with injured myofibers. Also involved in skeletal muscle hypertrophy, probably by mediating the fusion of satellite cells with myofibers. The protein is Protein myomaker of Homo sapiens (Human).